A 141-amino-acid polypeptide reads, in one-letter code: Nucleoside diphosphate kinase 1 (141 aa).

The ATP site is built by lysine 11, phenylalanine 59, arginine 87, threonine 93, arginine 104, and asparagine 114. Residue histidine 117 is the Pros-phosphohistidine intermediate of the active site.

This sequence belongs to the NDK family. As to quaternary structure, homotetramer. Requires Mg(2+) as cofactor.

Its subcellular location is the cytoplasm. The catalysed reaction is a 2'-deoxyribonucleoside 5'-diphosphate + ATP = a 2'-deoxyribonucleoside 5'-triphosphate + ADP. The enzyme catalyses a ribonucleoside 5'-diphosphate + ATP = a ribonucleoside 5'-triphosphate + ADP. In terms of biological role, major role in the synthesis of nucleoside triphosphates other than ATP. The ATP gamma phosphate is transferred to the NDP beta phosphate via a ping-pong mechanism, using a phosphorylated active-site intermediate. In Protochlamydia amoebophila (strain UWE25), this protein is Nucleoside diphosphate kinase 1.